We begin with the raw amino-acid sequence, 874 residues long: Valine--tRNA ligase (874 aa).

The disordered stretch occupies residues M1 to P22. Residues P57–H67 carry the 'HIGH' region motif. The 'KMSKS' region motif lies at K531–S535. K534 contributes to the ATP binding site. A coiled-coil region spans residues V805–L871.

This sequence belongs to the class-I aminoacyl-tRNA synthetase family. ValS type 1 subfamily. As to quaternary structure, monomer.

It localises to the cytoplasm. It catalyses the reaction tRNA(Val) + L-valine + ATP = L-valyl-tRNA(Val) + AMP + diphosphate. Its function is as follows. Catalyzes the attachment of valine to tRNA(Val). As ValRS can inadvertently accommodate and process structurally similar amino acids such as threonine, to avoid such errors, it has a 'posttransfer' editing activity that hydrolyzes mischarged Thr-tRNA(Val) in a tRNA-dependent manner. The chain is Valine--tRNA ligase from Streptomyces coelicolor (strain ATCC BAA-471 / A3(2) / M145).